The following is a 91-amino-acid chain: Large ribosomal subunit protein uL22 (91 aa).

It belongs to the universal ribosomal protein uL22 family. Part of the 50S ribosomal subunit.

This protein binds specifically to 23S rRNA; its binding is stimulated by other ribosomal proteins, e.g. L4, L17, and L20. It is important during the early stages of 50S assembly. It makes multiple contacts with different domains of the 23S rRNA in the assembled 50S subunit and ribosome. In terms of biological role, the globular domain of the protein is located near the polypeptide exit tunnel on the outside of the subunit, while an extended beta-hairpin is found that lines the wall of the exit tunnel in the center of the 70S ribosome. This chain is Large ribosomal subunit protein uL22 (rplV), found in Clover yellow edge phytoplasma.